The chain runs to 204 residues: UPF0637 protein USA300HOU_1046.1 (204 aa).

Belongs to the UPF0637 family.

The sequence is that of UPF0637 protein USA300HOU_1046.1 from Staphylococcus aureus (strain USA300 / TCH1516).